Here is a 256-residue protein sequence, read N- to C-terminus: Homeobox protein TGIF2LX (256 aa).

A disordered region spans residues 1–45 (MEAAADSPAETRSRVEKDSRRVEKDSRRPKKDSPAKTQSPAQDTS). Residues 9 to 34 (AETRSRVEKDSRRVEKDSRRPKKDSP) show a composition bias toward basic and acidic residues. Positions 35 to 45 (AKTQSPAQDTS) are enriched in polar residues. Positions 62-125 (EHKKKRKGYL…INARRRILPD (64 aa)) form a DNA-binding region, homeobox; TALE-type. Positions 136 to 224 (VGHKTGKDAN…SSSPEPVSTE (89 aa)) are disordered. Polar residues predominate over residues 166–179 (DNVQSLPLRSSPKG). Residues 209 to 224 (VSNITSSSSPEPVSTE) are compositionally biased toward low complexity.

Belongs to the TALE/TGIF homeobox family.

Its subcellular location is the nucleus. In terms of biological role, may have a transcription role in testis. This is Homeobox protein TGIF2LX (TGIF2LX) from Papio hamadryas (Hamadryas baboon).